We begin with the raw amino-acid sequence, 122 residues long: UPF0102 protein Ping_1176 (122 aa).

This sequence belongs to the UPF0102 family.

This chain is UPF0102 protein Ping_1176, found in Psychromonas ingrahamii (strain DSM 17664 / CCUG 51855 / 37).